A 99-amino-acid chain; its full sequence is Cell division protein FtsB (99 aa).

Residues 1-3 (MKF) lie on the Cytoplasmic side of the membrane. The helical transmembrane segment at 4-21 (FVIALIVLLGLLQYRLWS) threads the bilayer. The Periplasmic portion of the chain corresponds to 22-99 (GDNSLPEYFV…GDRSVSSPSQ (78 aa)). Residues 31 to 73 (VLQKQIAAQQEGNAKLNERNQVLKEEIIDLKSGTEAIEERARN) are a coiled coil.

Belongs to the FtsB family. As to quaternary structure, part of a complex composed of FtsB, FtsL and FtsQ.

Its subcellular location is the cell inner membrane. Its function is as follows. Essential cell division protein. May link together the upstream cell division proteins, which are predominantly cytoplasmic, with the downstream cell division proteins, which are predominantly periplasmic. In Shewanella sp. (strain ANA-3), this protein is Cell division protein FtsB.